A 4749-amino-acid chain; its full sequence is Dynein heavy chain domain-containing protein 1 (4749 aa).

Residues 1 to 18 (MKPHSQTSPPSLPMPSTS) are compositionally biased toward low complexity. Disordered regions lie at residues 1–27 (MKPH…TQKP), 275–308 (ESSD…KKSS), and 2690–2785 (ESLA…KLQS). Over residues 2696-2716 (CEEEEVEEEKVPEVESEEEIA) the composition is skewed to acidic residues. The segment covering 2738–2749 (QATTGSFLSENS) has biased composition (polar residues). The stretch at 3197–3224 (CQHQESLIENLVRQHDALKAQQEVFLEQ) forms a coiled coil. The interval 3568–3667 (PPKQNRSLEP…SLPSCLTVLS (100 aa)) is disordered. Basic and acidic residues predominate over residues 3578-3593 (SPKESKEKFHVTKQDS). Residues 3594–3636 (GDNTEDELEDENNEEEDEANEQRKEQKAEENKIQGENEQEVQE) adopt a coiled-coil conformation. Residues 3595 to 3612 (DNTEDELEDENNEEEDEA) show a composition bias toward acidic residues. A compositionally biased stretch (basic and acidic residues) spans 3613–3628 (NEQRKEQKAEENKIQG). Residues 3644–3655 (ESSGSHSSLPSE) show a composition bias toward low complexity. Residues 3656 to 3667 (TQSLPSCLTVLS) are compositionally biased toward polar residues. Coiled-coil stretches lie at residues 3818–3838 (MVRT…LEDQ) and 4431–4451 (ERQL…LQAL).

It belongs to the dynein heavy chain family. As to expression, expressed in spermatozoa (at protein level).

It is found in the cell projection. The protein resides in the cilium. The protein localises to the flagellum. In terms of biological role, essential for the normal function of sperm flagella axonemes. This chain is Dynein heavy chain domain-containing protein 1 (Dnhd1), found in Mus musculus (Mouse).